Here is a 184-residue protein sequence, read N- to C-terminus: Alpha-tubulin N-acetyltransferase (184 aa).

One can recognise an N-acetyltransferase domain in the interval 1–170 (METFNHIDIK…NHFVIFSNYF (170 aa)). Residues 104 to 117 (FYIL…GLGI) and 140 to 149 (SYKLQNFLKK) contribute to the acetyl-CoA site.

Belongs to the acetyltransferase ATAT1 family.

The catalysed reaction is L-lysyl-[alpha-tubulin] + acetyl-CoA = N(6)-acetyl-L-lysyl-[alpha-tubulin] + CoA + H(+). Its function is as follows. Specifically acetylates 'Lys-40' in alpha-tubulin on the lumenal side of microtubules. Promotes microtubule destabilization and accelerates microtubule dynamics; this activity may be independent of acetylation activity. Acetylates alpha-tubulin with a slow enzymatic rate, due to a catalytic site that is not optimized for acetyl transfer. Enters the microtubule through each end and diffuses quickly throughout the lumen of microtubules. Acetylates only long/old microtubules because of its slow acetylation rate since it does not have time to act on dynamically unstable microtubules before the enzyme is released. The protein is Alpha-tubulin N-acetyltransferase of Plasmodium falciparum (isolate 3D7).